Reading from the N-terminus, the 1270-residue chain is DNA-directed RNA polymerase subunit beta (1270 aa).

The protein belongs to the RNA polymerase beta chain family. As to quaternary structure, the RNAP catalytic core consists of 2 alpha, 1 beta, 1 beta' and 1 omega subunit. When a sigma factor is associated with the core the holoenzyme is formed, which can initiate transcription.

It carries out the reaction RNA(n) + a ribonucleoside 5'-triphosphate = RNA(n+1) + diphosphate. DNA-dependent RNA polymerase catalyzes the transcription of DNA into RNA using the four ribonucleoside triphosphates as substrates. In Flavobacterium johnsoniae (strain ATCC 17061 / DSM 2064 / JCM 8514 / BCRC 14874 / CCUG 350202 / NBRC 14942 / NCIMB 11054 / UW101) (Cytophaga johnsonae), this protein is DNA-directed RNA polymerase subunit beta.